Consider the following 542-residue polypeptide: Coiled-coil domain-containing protein 60 (542 aa).

A coiled-coil region spans residues 70–97; sequence TMLQEETAFKKHQQHLKKLQEEELNKFQ. Disordered stretches follow at residues 228–284 and 334–358; these read ATRK…EEEV and QTTH…TQKK. Composition is skewed to low complexity over residues 245–261 and 342–351; these read SGGS…NPSS and RSSTTSGESH.

The protein is Coiled-coil domain-containing protein 60 (Ccdc60) of Rattus norvegicus (Rat).